Here is a 352-residue protein sequence, read N- to C-terminus: MTITTLSRQNIQALTPYQSARKLGGNGTIWLNANEYPTSPEFQLSGKDLNRYPEPQPQRVVQAYANYAGVSTENVLVTRGGDEGIELIIHTFCEPKQDAILFCPPTYGMYAVSAETAGVLSKTVPLTDDFQLNLPEIKNHLNDVKVVFVCSPNNPTGNLLKQSDILDLLQITAGKAIVVVDEAYIEFCPEASVINLLKNYPHLAIIRTLSKAFALAGLRCGFVLANPELIDILSKVIAPYPIPVPSADLAEQALRPANIATVQALTQELLSNRQWLAKALLVLHQVEKVYESEANYLLIKCQNGQAVFKALWEQGIILRDQNKTLHLQNCIRITVGTRNECEKVVEAIKEVK.

Lysine 211 is modified (N6-(pyridoxal phosphate)lysine).

This sequence belongs to the class-II pyridoxal-phosphate-dependent aminotransferase family. Histidinol-phosphate aminotransferase subfamily. In terms of assembly, homodimer. Requires pyridoxal 5'-phosphate as cofactor.

The catalysed reaction is L-histidinol phosphate + 2-oxoglutarate = 3-(imidazol-4-yl)-2-oxopropyl phosphate + L-glutamate. The protein operates within amino-acid biosynthesis; L-histidine biosynthesis; L-histidine from 5-phospho-alpha-D-ribose 1-diphosphate: step 7/9. The protein is Histidinol-phosphate aminotransferase of Haemophilus influenzae (strain PittGG).